The chain runs to 464 residues: Arginine biosynthesis bifunctional protein ArgJ, mitochondrial (464 aa).

The N-terminal 22 residues, 1–22 (MAASFKALPQQLTLTRSFARCY), are a transit peptide targeting the mitochondrion. 6 residues coordinate substrate: threonine 193, lysine 222, threonine 233, glutamate 320, asparagine 459, and threonine 464. The active-site Nucleophile is threonine 233.

Belongs to the ArgJ family. As to quaternary structure, heterodimer of an alpha and a beta chain. In terms of processing, the alpha and beta chains are autoproteolytically processed from a single precursor protein within the mitochondrion.

The protein resides in the mitochondrion matrix. It carries out the reaction N(2)-acetyl-L-ornithine + L-glutamate = N-acetyl-L-glutamate + L-ornithine. It catalyses the reaction L-glutamate + acetyl-CoA = N-acetyl-L-glutamate + CoA + H(+). Its pathway is amino-acid biosynthesis; L-arginine biosynthesis; L-ornithine and N-acetyl-L-glutamate from L-glutamate and N(2)-acetyl-L-ornithine (cyclic): step 1/1. The protein operates within amino-acid biosynthesis; L-arginine biosynthesis; N(2)-acetyl-L-ornithine from L-glutamate: step 1/4. Its function is as follows. Catalyzes two activities which are involved in the cyclic version of arginine biosynthesis: the synthesis of acetylglutamate from glutamate and acetyl-CoA, and of ornithine by transacetylation between acetylornithine and glutamate. The chain is Arginine biosynthesis bifunctional protein ArgJ, mitochondrial from Verticillium alfalfae (strain VaMs.102 / ATCC MYA-4576 / FGSC 10136) (Verticillium wilt of alfalfa).